The sequence spans 183 residues: Phospholipase A2 inhibitor gamma subunit A1 (183 aa).

8 disulfide bridges follow: Cys3-Cys28, Cys6-Cys13, Cys21-Cys49, Cys55-Cys76, Cys77-Cys82, Cys100-Cys125, Cys118-Cys147, and Cys151-Cys173. Residue Asn158 is glycosylated (N-linked (GlcNAc...) asparagine).

Belongs to the CNF-like-inhibitor family. In terms of assembly, heterodimer of subunit A and subunit B. As to expression, expressed by the liver.

It is found in the secreted. Functionally, phospholipase A2 (PA2) inhibitor. Inhibits the enzymatic activity of PA2 of Deinagkistrodon acutus. Also shows a wide anti-hemorrhage activities to D.acutus, Naja atra and Agkistrodon halys venom. The native protein is more potent than the recombinant one. This chain is Phospholipase A2 inhibitor gamma subunit A1, found in Trimerodytes annularis (Red-bellied annulate keelback).